The following is a 208-amino-acid chain: V-type ATP synthase subunit E (208 aa).

This sequence belongs to the V-ATPase E subunit family.

Produces ATP from ADP in the presence of a proton gradient across the membrane. The sequence is that of V-type ATP synthase subunit E from Chlamydia felis (strain Fe/C-56) (Chlamydophila felis).